Here is an 80-residue protein sequence, read N- to C-terminus: Putative membrane protein insertion efficiency factor (80 aa).

The tract at residues 60–80 (SKTGKDPVPDRFSLKRNQEGE) is disordered. Residues 62–80 (TGKDPVPDRFSLKRNQEGE) are compositionally biased toward basic and acidic residues.

Belongs to the UPF0161 family.

It localises to the cell membrane. Could be involved in insertion of integral membrane proteins into the membrane. The sequence is that of Putative membrane protein insertion efficiency factor from Streptococcus pneumoniae serotype 4 (strain ATCC BAA-334 / TIGR4).